A 253-amino-acid chain; its full sequence is Probable transcriptional regulatory protein Synpcc7942_1017 (253 aa).

Belongs to the TACO1 family.

The protein localises to the cytoplasm. The polypeptide is Probable transcriptional regulatory protein Synpcc7942_1017 (Synechococcus elongatus (strain ATCC 33912 / PCC 7942 / FACHB-805) (Anacystis nidulans R2)).